Reading from the N-terminus, the 79-residue chain is Ketoisovalerate oxidoreductase subunit VorC (79 aa).

4Fe-4S ferredoxin-type domains are found at residues 4 to 33 (AYPVINRVECKACERCIIACPRKVLYMSNK) and 40 to 70 (HYVEYRGEGCNGCGNCYYTCPEINAIEVHIE). Residues cysteine 13, cysteine 16, cysteine 19, cysteine 23, cysteine 49, cysteine 52, cysteine 55, and cysteine 59 each coordinate [4Fe-4S] cluster.

In terms of assembly, heterotrimer of the VorA, VorB and VorC subunits. [4Fe-4S] cluster is required as a cofactor.

The catalysed reaction is 3-methyl-2-oxobutanoate + 2 oxidized [2Fe-2S]-[ferredoxin] + CoA = 2-methylpropanoyl-CoA + 2 reduced [2Fe-2S]-[ferredoxin] + CO2 + H(+). In Methanothermobacter marburgensis (strain ATCC BAA-927 / DSM 2133 / JCM 14651 / NBRC 100331 / OCM 82 / Marburg) (Methanobacterium thermoautotrophicum), this protein is Ketoisovalerate oxidoreductase subunit VorC (vorC).